Reading from the N-terminus, the 476-residue chain is MEKRLRLAPSPTGLFHIGTARTALFNWLYAQKIGGKFLIRIEDTDFLRSKSEYTKNILEGLKWLGLKWDEEPIKQSDRISIHKSYIKKLLECGAAYRCFTSEDEISELREEQKKKGLPPKHDNRHRSLSKEEIETFISQGRTSVIRFKIDEKIEIKWIDQIRGEIKWQGKDLGGDLVLSRRAKGYEIGDPLYNLAVVVDDNFMNITHVVRGEDHISNTAKQILIYKALNFNLPTFSHTPLILNSEGKKLSKRDCVTSIDEFREMGYLPEALSNYMAFLGWSPKSADREILSLEEISKIFDLSEINKAGAKFSWEKLNWINSQYIKNIESIKLIEIMRKYWDDNGWKPPSEEWANKLAILIRDSMTLLKDSIDQSKPFFLIPTIQKEGQDFLEIRESKLSLKLILNYLIEKNTIKLNKEKAKEIINEISKKHNIKKGILMKSLRVAFFGSLSGPDLIQSWELFAESKTDRTRIERCL.

Positions 9–19 match the 'HIGH' region motif; that stretch reads PSPTGLFHIGT. The short motif at 248–252 is the 'KMSKS' region element; the sequence is KLSKR. Lys-251 is a binding site for ATP.

It belongs to the class-I aminoacyl-tRNA synthetase family. Glutamate--tRNA ligase type 1 subfamily. In terms of assembly, monomer.

The protein localises to the cytoplasm. It catalyses the reaction tRNA(Glu) + L-glutamate + ATP = L-glutamyl-tRNA(Glu) + AMP + diphosphate. Its function is as follows. Catalyzes the attachment of glutamate to tRNA(Glu) in a two-step reaction: glutamate is first activated by ATP to form Glu-AMP and then transferred to the acceptor end of tRNA(Glu). The protein is Glutamate--tRNA ligase of Prochlorococcus marinus (strain MIT 9301).